We begin with the raw amino-acid sequence, 234 residues long: UPF0758 protein Smlt0399 (234 aa).

The MPN domain occupies 103 to 225 (VGNNPAAVGR…PVSFAERGLL (123 aa)). H174, H176, and D187 together coordinate Zn(2+). A JAMM motif motif is present at residues 174 to 187 (HNHPSGDPEPSSAD).

It belongs to the UPF0758 family.

The protein is UPF0758 protein Smlt0399 of Stenotrophomonas maltophilia (strain K279a).